A 738-amino-acid chain; its full sequence is uncharacterized protein (738 aa).

Positions 1-10 (MQKKVVQSAS) are enriched in polar residues. 3 disordered regions span residues 1-23 (MQKK…KRSS), 53-83 (EGTH…NPNP), and 219-266 (HQDG…PLST). A compositionally biased stretch (low complexity) spans 55–77 (THSASVHPSTSSTSHISSPSAFS). Residues 246-266 (GSPSPNRSLNVSNNTTPPLST) show a composition bias toward polar residues. Residues Thr260 and Thr261 each carry the phosphothreonine modification. The segment at residues 292-318 (CAKCQKDNKKCDDARPCQRCIKAKTDC) is a DNA-binding region (zn(2)-C6 fungal-type). Over residues 323-335 (RKKRPTGVRRGPY) the composition is skewed to basic residues. Disordered regions lie at residues 323 to 372 (RKKR…SDNQ) and 441 to 464 (DETG…SFTN). Residues 340 to 352 (DTSNNTKSTTASS) show a composition bias toward low complexity. The span at 353 to 372 (GHSTQDSLSSKMLDPSSDNQ) shows a compositional bias: polar residues.

Its subcellular location is the cytoplasm. It localises to the nucleus. This is an uncharacterized protein from Schizosaccharomyces pombe (strain 972 / ATCC 24843) (Fission yeast).